The following is a 1024-amino-acid chain: Multidrug resistance protein MdtC (1024 aa).

12 helical membrane-spanning segments follow: residues 12–32, 333–353, 360–380, 387–407, 435–455, 469–489, 528–548, 853–873, 875–895, 897–917, 953–973, and 984–1004; these read VATTLLTLAITLSGIIGFSLL, EVERSLVIAVALVILVVFIFL, LIPAVAVPVSLIGTFAAMYLC, LSLMALTIATGFVVDDAIVVL, VLSMSISLVAVFIPLLLMAGL, VAIGISLVISLTLTPMMCAWL, WVMVVLLSTIALNVWLYISIP, LWLIMAAIATVYIVLGILYES, VHPLTILSTLPSAGVGALLAL, LFDAPFSLIALIGIMLLIGIV, PIIMTTLAALFGALPLVLSSG, and ITIVGGLVVSQLLTLYTTPVI.

It belongs to the resistance-nodulation-cell division (RND) (TC 2.A.6) family. MdtC subfamily. As to quaternary structure, part of a tripartite efflux system composed of MdtA, MdtB and MdtC. MdtC forms a heteromultimer with MdtB.

Its subcellular location is the cell inner membrane. This Yersinia pseudotuberculosis serotype IB (strain PB1/+) protein is Multidrug resistance protein MdtC.